Reading from the N-terminus, the 308-residue chain is ADP-L-glycero-D-manno-heptose-6-epimerase (308 aa).

NADP(+)-binding positions include 10-11 (FI), 31-32 (DN), Lys38, Lys53, 75-79 (EGACS), and Asn92. Catalysis depends on Tyr139, which acts as the Proton acceptor. Lys143 contacts NADP(+). Asn168 lines the substrate pocket. Positions 169 and 177 each coordinate NADP(+). Catalysis depends on Lys177, which acts as the Proton acceptor. Residues Ser179, His186, 200-203 (FAGS), Arg208, and Tyr271 contribute to the substrate site.

Belongs to the NAD(P)-dependent epimerase/dehydratase family. HldD subfamily. Homopentamer. NADP(+) serves as cofactor.

It catalyses the reaction ADP-D-glycero-beta-D-manno-heptose = ADP-L-glycero-beta-D-manno-heptose. It participates in nucleotide-sugar biosynthesis; ADP-L-glycero-beta-D-manno-heptose biosynthesis; ADP-L-glycero-beta-D-manno-heptose from D-glycero-beta-D-manno-heptose 7-phosphate: step 4/4. Its function is as follows. Catalyzes the interconversion between ADP-D-glycero-beta-D-manno-heptose and ADP-L-glycero-beta-D-manno-heptose via an epimerization at carbon 6 of the heptose. This chain is ADP-L-glycero-D-manno-heptose-6-epimerase, found in Haemophilus influenzae (strain PittGG).